The primary structure comprises 611 residues: Chaperone protein DnaK (611 aa).

Thr173 bears the Phosphothreonine; by autocatalysis mark. The segment covering 579 to 592 (AAGQAEGAQGAQDA) has biased composition (low complexity). Positions 579 to 598 (AAGQAEGAQGAQDAGAKKDN) are disordered.

It belongs to the heat shock protein 70 family.

Acts as a chaperone. The sequence is that of Chaperone protein DnaK from Bacillus cereus (strain ATCC 10987 / NRS 248).